Reading from the N-terminus, the 481-residue chain is Glutamyl-tRNA(Gln) amidotransferase subunit A (481 aa).

Catalysis depends on charge relay system residues Lys-79 and Ser-154. The tract at residues 136–157 (SAFGATKNPRNPEHVPGGSSGG) is disordered. Residue Ser-178 is the Acyl-ester intermediate of the active site.

It belongs to the amidase family. GatA subfamily. Heterotrimer of A, B and C subunits.

It catalyses the reaction L-glutamyl-tRNA(Gln) + L-glutamine + ATP + H2O = L-glutaminyl-tRNA(Gln) + L-glutamate + ADP + phosphate + H(+). Functionally, allows the formation of correctly charged Gln-tRNA(Gln) through the transamidation of misacylated Glu-tRNA(Gln) in organisms which lack glutaminyl-tRNA synthetase. The reaction takes place in the presence of glutamine and ATP through an activated gamma-phospho-Glu-tRNA(Gln). The sequence is that of Glutamyl-tRNA(Gln) amidotransferase subunit A from Lachnospira eligens (strain ATCC 27750 / DSM 3376 / VPI C15-48 / C15-B4) (Eubacterium eligens).